The sequence spans 58 residues: Keratin-associated protein 19-9b (58 aa).

Residues 6 to 52 (GNYYGGLGYGLGGFGGFGGLGYGYGSSYGLGGYGGYGYFSPSFYGGY) form a 12 X 2 AA repeats of G-[YCGS] region.

The protein belongs to the KRTAP type 19 family. Interacts with hair keratins.

Functionally, in the hair cortex, hair keratin intermediate filaments are embedded in an interfilamentous matrix, consisting of hair keratin-associated proteins (KRTAP), which are essential for the formation of a rigid and resistant hair shaft through their extensive disulfide bond cross-linking with abundant cysteine residues of hair keratins. The matrix proteins include the high-sulfur and high-glycine-tyrosine keratins. This Mus musculus (Mouse) protein is Keratin-associated protein 19-9b (Krtap19-9b).